Reading from the N-terminus, the 353-residue chain is Ubiquinol oxidase 1, mitochondrial (353 aa).

Residues 1 to 69 constitute a mitochondrion transit peptide; sequence MMTRGATRMT…RHFPVMGSRS (69 aa). The interval 77-99 is disordered; the sequence is DKQHDKKAENGSAAATGGGDGGD. A helical transmembrane segment spans residues 178–198; that stretch reads AMMLETVAAVPGMVGGMLLHC. Fe cation-binding residues include glutamate 182, glutamate 221, and histidine 224. The chain crosses the membrane as a helical span at residues 240-260; that stretch reads ALVFAVQGVFFNAYFVTYLLS. Glutamate 272, glutamate 323, and histidine 326 together coordinate Fe cation.

The protein belongs to the alternative oxidase family. Homodimer; disulfide-linked. The cofactor is Fe cation.

The protein resides in the mitochondrion inner membrane. The catalysed reaction is 2 a ubiquinol + O2 = 2 a ubiquinone + 2 H2O. With respect to regulation, stimulated by reduction of the disulfide bond and the presence of pyruvate. Its function is as follows. Catalyzes the cyanide-resistant oxidation of ubiquinol and the reduction of molecular oxygen to water, but does not translocate protons and consequently is not linked to oxidative phosphorylation. May increase respiration when the cytochrome respiratory pathway is restricted, or in response to low temperatures. The protein is Ubiquinol oxidase 1, mitochondrial (AOX1) of Nicotiana tabacum (Common tobacco).